The primary structure comprises 486 residues: Vacuolar protein sorting-associated protein 73 (486 aa).

The Cytoplasmic portion of the chain corresponds to 1–26; it reads MNRILSSASLLSNVSMPRQNKHKITK. The helical transmembrane segment at 27 to 47 threads the bilayer; sequence ALCYAIIVASIGSIQFGYHLS. The Mitochondrial intermembrane segment spans residues 48–90; the sequence is ELNAPQQVLSCSEFDIPMEGYPYDRTWLGKRGYKQCIPLNDEQ. The chain crosses the membrane as a helical span at residues 91–111; it reads IGIVTSVFCIGGILGSYFATS. Over 112–119 the chain is Cytoplasmic; sequence LANIYGRK. A helical transmembrane segment spans residues 120–140; sequence FSSLINCTLNIVGSLIIFNSN. Over 141–146 the chain is Mitochondrial intermembrane; the sequence is SYRGLI. A helical membrane pass occupies residues 147-167; it reads IGRILVGISCGSLIVIIPLFI. The Cytoplasmic segment spans residues 168-178; that stretch reads KEVAPSGWEGL. A helical transmembrane segment spans residues 179–199; it reads LGSMTQICIRLGVLLTQGIAL. Topologically, residues 200-208 are mitochondrial intermembrane; the sequence is PLTDSYRWR. The helical transmembrane segment at 209-229 threads the bilayer; it reads WILFGSFLIAVLNFFMWFIVD. Residues 230 to 305 are Cytoplasmic-facing; it reads ESPKWLLAHG…RDRTNVKSRH (76 aa). A helical transmembrane segment spans residues 306-326; that stretch reads VITVLLFGQQFCGINSIVLYG. Over 327–342 the chain is Mitochondrial intermembrane; the sequence is TKIISQLYPQHAIRIN. A helical transmembrane segment spans residues 343 to 363; that stretch reads FFISMVNVLVTILVSLLIHSL. At 364–366 the chain is on the cytoplasmic side; it reads PRK. Residues 367-387 form a helical membrane-spanning segment; the sequence is PLLMTSTVLVSVTAFIMGIAM. The Mitochondrial intermembrane portion of the chain corresponds to 388–396; that stretch reads NHNKMNLLI. The chain crosses the membrane as a helical span at residues 397–417; the sequence is VFSFIYMGVFTMGLNPLPFII. Over 418 to 432 the chain is Cytoplasmic; sequence MREVSKPQDMVLAQR. Residues 433-453 form a helical membrane-spanning segment; that stretch reads YGTICNWVGTFIIAYTFPIIH. Position 454 (aspartate 454) is a topological domain, mitochondrial intermembrane. Residues 455 to 475 traverse the membrane as a helical segment; that stretch reads VLSGYVFIIFAIIACSISAFI. At 476 to 486 the chain is on the cytoplasmic side; that stretch reads WKKVPETKRSG.

It belongs to the major facilitator superfamily. Sugar transporter (TC 2.A.1.1) family.

It is found in the mitochondrion membrane. In terms of biological role, may be involved in vacuolar protein sorting. This is Vacuolar protein sorting-associated protein 73 (VPS73) from Saccharomyces cerevisiae (strain ATCC 204508 / S288c) (Baker's yeast).